Consider the following 615-residue polypeptide: Sodium-dependent dopamine transporter (615 aa).

The tract at residues 1-39 (MQLVPTDDPDEKIGRTSNGMQNATLPIDGPVNTEPKDPA) is disordered. The Cytoplasmic portion of the chain corresponds to 1-46 (MQLVPTDDPDEKIGRTSNGMQNATLPIDGPVNTEPKDPAREQWSGK). Positions 15–24 (RTSNGMQNAT) are enriched in polar residues. Residues 47 to 72 (LDFLLSVVGFAVDLGNIWRFPYLCFK) traverse the membrane as a helical segment. Residues glycine 55, alanine 57, valine 58, and asparagine 62 each coordinate Na(+). The Extracellular segment spans residues 73 to 76 (NGGG). Residues 77–100 (VFLIPYSIMVLLTGVPLFYMELCL) form a helical membrane-spanning segment. Topologically, residues 101–120 (GQYYRKGAITTWGRICPLFK) are cytoplasmic. A helical membrane pass occupies residues 121–151 (GIGYCVILTAFYVDFFYNVILAWGLHYLYTS). The Extracellular portion of the chain corresponds to 152–229 (FSFNLPWASC…IRSVTDLGNV (78 aa)). Cysteines 161 and 170 form a disulfide. Asparagine 162 and asparagine 187 each carry an N-linked (GlcNAc...) asparagine glycan. A helical transmembrane segment spans residues 230–250 (RWDIALSLFVVYLICYFSMWK). The Cytoplasmic portion of the chain corresponds to 251–253 (GIH). Residues 254–278 (TSGKVVWFTALFPYVVLGILFIRGV) form a helical membrane-spanning segment. The Extracellular segment spans residues 279–302 (TLPGWQNGIEYYLRPNFEMLKRPS). The helical transmembrane segment at 303-328 (VWQDAATQVFFSLGPGFGVLMAYSSY) threads the bilayer. A Na(+)-binding site is contributed by serine 314. Over 329-334 (NDFHNN) the chain is Cytoplasmic. Residues 335–358 (VYVDALFTSFINCATSFLSGFVIF) traverse the membrane as a helical segment. Position 346 (asparagine 346) interacts with Na(+). Residues 359-398 (SVLGYMSCKSGKPIEAVAQEGPGLVFVVYPEALSTMPYAP) are Extracellular-facing. The helical transmembrane segment at 399–424 (FWSVLFFLMLMTLGLDSSFGGSEAII) threads the bilayer. Leucine 411, aspartate 414, and serine 415 together coordinate Na(+). Residues 425-439 (TGLSDEFPILKKNRE) lie on the Cytoplasmic side of the membrane. The chain crosses the membrane as a helical span at residues 440 to 460 (VFVGCLFAFYMVIGIAMCTEG). Position 461 (glycine 461) is a topological domain, extracellular. The helical transmembrane segment at 462–488 (ILIMEWLIIYGTTWGLLIAVFCEAMVI) threads the bilayer. The Cytoplasmic portion of the chain corresponds to 489–518 (AYIYGLRQFVHDVKEMMGFRPGNYWKFCWS). A helical transmembrane segment spans residues 519 to 541 (CAAPFILLSMITSNFINYQALTY). Residues 542-544 (QDY) are Extracellular-facing. The helical transmembrane segment at 545 to 565 (TYPTAANVIGIIFALSGASFI) threads the bilayer. Residues 566–615 (PLVGIYKFVNARGNTISEKWQRVTMPYRKRPNQTEYIPIPTTQPHSDIML) lie on the Cytoplasmic side of the membrane.

Belongs to the sodium:neurotransmitter symporter (SNF) (TC 2.A.22) family.

The protein localises to the cell membrane. Its function is as follows. Dopamine transporter. Terminates the action of dopamine by its high affinity sodium-dependent reuptake into presynaptic terminals. Plays a role in the learned avoidance behavior of animals exposed to food that induces mitochondrial stress. This Caenorhabditis elegans protein is Sodium-dependent dopamine transporter.